The sequence spans 348 residues: MSRFWSPFVKDLVPYVPGEQPKLARLVKLNTNENPYGPSPKALEAMRGELNDNLRLYPDPNGDRLKQAVAEYYGVTTGQVFVGNGSDEVLAHIFHGLFQHGGPLLFPDISYSFYPVYCGLYGIPFEPVALDEQFQIRVEDYQKPNAGIIFPNPNAPTGCLLPLQAIEQLLQANRDSVVVVDEAYIDFGGQTAISLVDRYDNLLVTQTLSKSRSLAGLRVGLAVGHPDLIEALERIKNSFNSYPLDRMAIVGAAAAFEDQAYFEATCRKVIDSREALVEQLTAKGFEVLPSAANFIFARHPQEDAAQLAARLREQGVIVRHFKQQRIAQFLRITIGTPEMNQALIDALS.

At Lys-210 the chain carries N6-(pyridoxal phosphate)lysine.

Belongs to the class-II pyridoxal-phosphate-dependent aminotransferase family. Histidinol-phosphate aminotransferase subfamily. In terms of assembly, homodimer. Pyridoxal 5'-phosphate is required as a cofactor.

The catalysed reaction is L-histidinol phosphate + 2-oxoglutarate = 3-(imidazol-4-yl)-2-oxopropyl phosphate + L-glutamate. Its pathway is amino-acid biosynthesis; L-histidine biosynthesis; L-histidine from 5-phospho-alpha-D-ribose 1-diphosphate: step 7/9. This chain is Histidinol-phosphate aminotransferase, found in Pseudomonas putida (strain W619).